A 119-amino-acid chain; its full sequence is Membrane-anchored ubiquitin-fold protein 3 (119 aa).

Residues 8–76 (IEVKFRLFDG…NNRTLAESRV (69 aa)) enclose the Ubiquitin-like domain. At Cys116 the chain carries Cysteine methyl ester. Cys116 is lipidated: S-geranylgeranyl cysteine. A propeptide spans 117 to 119 (TIL) (removed in mature form).

Its subcellular location is the cell membrane. In terms of biological role, may serve as docking site to facilitate the association of other proteins to the plasma membrane. The polypeptide is Membrane-anchored ubiquitin-fold protein 3 (MUB3) (Oryza sativa subsp. japonica (Rice)).